The chain runs to 443 residues: Tol-Pal system protein TolB (443 aa).

A signal peptide spans 1–33 (MKIGIINTKIRTVFSAFACMIAASLVCTMPARA).

It belongs to the TolB family. In terms of assembly, the Tol-Pal system is composed of five core proteins: the inner membrane proteins TolA, TolQ and TolR, the periplasmic protein TolB and the outer membrane protein Pal. They form a network linking the inner and outer membranes and the peptidoglycan layer.

The protein localises to the periplasm. Its function is as follows. Part of the Tol-Pal system, which plays a role in outer membrane invagination during cell division and is important for maintaining outer membrane integrity. The chain is Tol-Pal system protein TolB from Brucella suis (strain ATCC 23445 / NCTC 10510).